The following is a 345-amino-acid chain: tRNA N6-adenosine threonylcarbamoyltransferase (345 aa).

Positions 115 and 119 each coordinate Fe cation. Substrate is bound by residues 137–141 (LVSGG), Asp-170, Gly-183, Asp-187, and Asn-276. Asp-306 contributes to the Fe cation binding site.

Belongs to the KAE1 / TsaD family. Fe(2+) is required as a cofactor.

It localises to the cytoplasm. It catalyses the reaction L-threonylcarbamoyladenylate + adenosine(37) in tRNA = N(6)-L-threonylcarbamoyladenosine(37) in tRNA + AMP + H(+). Its function is as follows. Required for the formation of a threonylcarbamoyl group on adenosine at position 37 (t(6)A37) in tRNAs that read codons beginning with adenine. Is involved in the transfer of the threonylcarbamoyl moiety of threonylcarbamoyl-AMP (TC-AMP) to the N6 group of A37, together with TsaE and TsaB. TsaD likely plays a direct catalytic role in this reaction. The sequence is that of tRNA N6-adenosine threonylcarbamoyltransferase from Pediococcus pentosaceus (strain ATCC 25745 / CCUG 21536 / LMG 10740 / 183-1w).